The sequence spans 301 residues: Homoserine O-acetyltransferase (301 aa).

C142 acts as the Acyl-thioester intermediate in catalysis. The substrate site is built by K163 and S192. The Proton acceptor role is filled by H235. E237 is an active-site residue. R249 is a substrate binding site.

It belongs to the MetA family.

The protein resides in the cytoplasm. The catalysed reaction is L-homoserine + acetyl-CoA = O-acetyl-L-homoserine + CoA. Its pathway is amino-acid biosynthesis; L-methionine biosynthesis via de novo pathway; O-acetyl-L-homoserine from L-homoserine: step 1/1. Its function is as follows. Transfers an acetyl group from acetyl-CoA to L-homoserine, forming acetyl-L-homoserine. This chain is Homoserine O-acetyltransferase, found in Bacillus cereus (strain 03BB102).